The following is a 446-amino-acid chain: Ribosomal protein uS12 methylthiotransferase RimO (446 aa).

The region spanning 9 to 121 (PKVGFVSLGC…VLDAIHAALP (113 aa)) is the MTTase N-terminal domain. The [4Fe-4S] cluster site is built by C18, C54, C83, C152, C156, and C159. The Radical SAM core domain maps to 138 to 375 (LTPPHYAYLK…MAVQEAISRQ (238 aa)). One can recognise a TRAM domain in the interval 378–445 (QRRVGQRQRV…AHDLYGMVVS (68 aa)).

Belongs to the methylthiotransferase family. RimO subfamily. It depends on [4Fe-4S] cluster as a cofactor.

It is found in the cytoplasm. It carries out the reaction L-aspartate(89)-[ribosomal protein uS12]-hydrogen + (sulfur carrier)-SH + AH2 + 2 S-adenosyl-L-methionine = 3-methylsulfanyl-L-aspartate(89)-[ribosomal protein uS12]-hydrogen + (sulfur carrier)-H + 5'-deoxyadenosine + L-methionine + A + S-adenosyl-L-homocysteine + 2 H(+). Catalyzes the methylthiolation of an aspartic acid residue of ribosomal protein uS12. This Acidithiobacillus ferrooxidans (strain ATCC 23270 / DSM 14882 / CIP 104768 / NCIMB 8455) (Ferrobacillus ferrooxidans (strain ATCC 23270)) protein is Ribosomal protein uS12 methylthiotransferase RimO.